The following is an 863-amino-acid chain: Glycogen phosphorylase (863 aa).

Position 618 is an N6-(pyridoxal phosphate)lysine (K618).

It belongs to the glycogen phosphorylase family. It depends on pyridoxal 5'-phosphate as a cofactor.

The catalysed reaction is [(1-&gt;4)-alpha-D-glucosyl](n) + phosphate = [(1-&gt;4)-alpha-D-glucosyl](n-1) + alpha-D-glucose 1-phosphate. Phosphorylase is an important allosteric enzyme in carbohydrate metabolism. Enzymes from different sources differ in their regulatory mechanisms and in their natural substrates. However, all known phosphorylases share catalytic and structural properties. The chain is Glycogen phosphorylase (glgP) from Mycobacterium tuberculosis (strain ATCC 25618 / H37Rv).